A 140-amino-acid polypeptide reads, in one-letter code: MIDIKDIQEALPHRYPMLLVDRVLEVSDDHIVALKNVTINEPFFNGHFPHYPVMPGVLIMEALAQTAGVLELSKEENKGKLVFYAGMDKVKFKKQVIPGDQLIMTATFIKRRGTIAVVEAKAEVDGKLAASGTLTFAIGS.

His47 is an active-site residue.

This sequence belongs to the thioester dehydratase family. FabZ subfamily.

The protein resides in the cytoplasm. It catalyses the reaction a (3R)-hydroxyacyl-[ACP] = a (2E)-enoyl-[ACP] + H2O. Functionally, involved in unsaturated fatty acids biosynthesis. Catalyzes the dehydration of short chain beta-hydroxyacyl-ACPs and long chain saturated and unsaturated beta-hydroxyacyl-ACPs. The sequence is that of 3-hydroxyacyl-[acyl-carrier-protein] dehydratase FabZ from Streptococcus uberis (strain ATCC BAA-854 / 0140J).